The primary structure comprises 648 residues: Biosynthetic arginine decarboxylase (648 aa).

Lysine 109 carries the post-translational modification N6-(pyridoxal phosphate)lysine. Residue isoleucine 291–phenylalanine 301 coordinates substrate.

Belongs to the Orn/Lys/Arg decarboxylase class-II family. SpeA subfamily. It depends on Mg(2+) as a cofactor. Pyridoxal 5'-phosphate serves as cofactor.

The enzyme catalyses L-arginine + H(+) = agmatine + CO2. It functions in the pathway amine and polyamine biosynthesis; agmatine biosynthesis; agmatine from L-arginine: step 1/1. In terms of biological role, catalyzes the biosynthesis of agmatine from arginine. This Prochlorococcus marinus (strain AS9601) protein is Biosynthetic arginine decarboxylase.